Consider the following 368-residue polypeptide: Trans-enoyl reductase thnE (368 aa).

An NADP(+)-binding site is contributed by 53–56; that stretch reads VDVK. 140 to 147 is a binding site for substrate; that stretch reads LATATAAY. Residues 179–182, 202–205, Tyr-220, and 267–268 each bind NADP(+); these read STAT, SPSN, and VE. 289–293 provides a ligand contact to substrate; sequence VMTVW. NADP(+) is bound at residue 358–359; sequence PS.

Belongs to the zinc-containing alcohol dehydrogenase family. Monomer.

The catalysed reaction is malate + 6 malonyl-CoA + acetyl-CoA + 2 AH2 + 2 S-adenosyl-L-methionine + 5 NADPH + 9 H(+) = trihazone A + 2 A + 2 S-adenosyl-L-homocysteine + 6 CO2 + 5 NADP(+) + 7 CoA + 6 H2O. It functions in the pathway secondary metabolite biosynthesis. In terms of biological role, trans-enoyl reductase; part of the gene cluster that produces the tetronate natural products trihazones. The PKS-NRPS synthetase thnA with the help of the trans-enoyl reductase thnE are responsible for the synthesis of the carboxylmethyl containing trihazone A. The PKS portion of thnA synthesizes beta-keto-triene chain from one acetyl-CoA and 6 equivalents of malonyl-CoA, in collaboration with thnE, which selectively reduces the enoyl intermediate during the first and fourth iteration of the PKS. The NRPS domain selects and activates malate, of which the alpha-hydroxyl group attacks the completed polyketide acyl-S-ACP chain to form the ester product. Intramolecular Dieckmann cyclization catalyzed by the terminal reductase domain releases the product as trihazone A from the PKS-NPRS. The pathway begins with the formation of trihazone A by the hybrid PKS-NRPS synthetase thnA and the trans-enoyl reductase thnE. Trihazone A is further decarboxylated by the 2-oxoglutarate-dependent dioxygenase thnC to produce trihazone D. The function of the FAD-dependent monooxygenase thnD has still to be identified. This Trichoderma harzianum (Hypocrea lixii) protein is Trans-enoyl reductase thnE.